The sequence spans 146 residues: Leghemoglobin Lb120-8 (146 aa).

The region spanning 2–146 is the Globin domain; that stretch reads GFTEKQEALV…LASAIKKAMN (145 aa). Residues Tyr24 and Tyr29 each carry the nitrated tyrosine modification. Ser44 serves as a coordination point for heme b. Ser44 is modified (phosphoserine). Residue His61 participates in O2 binding. 3 residues coordinate heme b: Lys64, His93, and Lys96. Tyr134 bears the Nitrated tyrosine mark.

It belongs to the plant globin family. As to quaternary structure, monomer. Post-translationally, nitrated in effective nodules and particularly in hypoxic conditions; this mechanism may play a protective role in the symbiosis by buffering toxic peroxynitrite NO(2)(-). Nitration level decrease during nodule senescence. In terms of processing, phosphorylation at Ser-44 disrupts the molecular environment of its porphyrin ring oxygen binding pocket, thus leading to a reduced oxygen consumption and to the delivery of oxygen O(2) to symbiosomes. Root nodules.

It is found in the cytoplasm. The protein localises to the cytosol. It localises to the nucleus. Leghemoglobin that reversibly binds oxygen O(2) through a pentacoordinated heme iron. In root nodules, facilitates the diffusion of oxygen to the bacteroids while preventing the bacterial nitrogenase from being inactivated by buffering dioxygen, nitric oxide and carbon monoxide, and promoting the formation of reactive oxygen species (ROS, e.g. H(2)O(2)). This role is essential for symbiotic nitrogen fixation (SNF). The protein is Leghemoglobin Lb120-8 of Pisum sativum (Garden pea).